Reading from the N-terminus, the 157-residue chain is UPF0756 membrane protein BH3161 (157 aa).

4 helical membrane-spanning segments follow: residues 1–21 (MISQ…LAKN), 54–74 (LGVT…EIGF), 87–107 (WVAL…IDLL), and 117–137 (LVLG…GPLI).

Belongs to the UPF0756 family.

The protein localises to the cell membrane. The protein is UPF0756 membrane protein BH3161 of Halalkalibacterium halodurans (strain ATCC BAA-125 / DSM 18197 / FERM 7344 / JCM 9153 / C-125) (Bacillus halodurans).